The primary structure comprises 260 residues: Glutamate racemase (260 aa).

Substrate contacts are provided by residues 14–15 and 46–47; these read DS and YG. C77 functions as the Proton donor/acceptor in the catalytic mechanism. A substrate-binding site is contributed by 78–79; that stretch reads NT. The Proton donor/acceptor role is filled by C188. A substrate-binding site is contributed by 189–190; the sequence is TH.

This sequence belongs to the aspartate/glutamate racemases family.

The catalysed reaction is L-glutamate = D-glutamate. Its pathway is cell wall biogenesis; peptidoglycan biosynthesis. Its function is as follows. Provides the (R)-glutamate required for cell wall biosynthesis. The polypeptide is Glutamate racemase (Clostridium perfringens (strain ATCC 13124 / DSM 756 / JCM 1290 / NCIMB 6125 / NCTC 8237 / Type A)).